A 206-amino-acid chain; its full sequence is Orotate phosphoribosyltransferase (206 aa).

5-phospho-alpha-D-ribose 1-diphosphate is bound by residues arginine 97, lysine 98, lysine 101, and 125–133 (NDVIASGRS). Orotate is bound at residue arginine 157.

It belongs to the purine/pyrimidine phosphoribosyltransferase family. PyrE subfamily. Homodimer. Requires Mg(2+) as cofactor.

The enzyme catalyses orotidine 5'-phosphate + diphosphate = orotate + 5-phospho-alpha-D-ribose 1-diphosphate. Its pathway is pyrimidine metabolism; UMP biosynthesis via de novo pathway; UMP from orotate: step 1/2. Catalyzes the transfer of a ribosyl phosphate group from 5-phosphoribose 1-diphosphate to orotate, leading to the formation of orotidine monophosphate (OMP). In Chlamydia felis (strain Fe/C-56) (Chlamydophila felis), this protein is Orotate phosphoribosyltransferase.